A 13477-amino-acid chain; its full sequence is Mucin-3B (13477 aa).

An N-terminal signal peptide occupies residues 1-21 (MQLLGLLSILWMLKSSPGATG). Low complexity predominate over residues 219–234 (TISSTTRTTERTPLPT). Disordered regions lie at residues 219 to 243 (TISS…TMSP), 327 to 347 (TRST…TVTD), 360 to 383 (GTLS…TPMT), 513 to 559 (SMTT…PSTL), 622 to 643 (ATTP…STPS), 815 to 839 (TTTN…TGTG), 923 to 968 (TSQT…STTE), 1154 to 1179 (PSMS…TSTL), 1480 to 1511 (SPTV…STEN), 1529 to 1601 (SISA…FPET), 1619 to 1638 (MTST…VTSM), 1692 to 1714 (TTST…TDSM), 1944 to 1968 (TTSA…TFTS), 2064 to 2123 (TPNA…IAKS), 2170 to 2197 (STSM…SGGI), 2275 to 2308 (SSSM…AEST), 2442 to 2462 (RSTP…VKGS), 2476 to 2497 (LSME…TATT), 2509 to 2537 (SHST…GPPT), 2591 to 2610 (SAMS…TETS), 2672 to 2717 (TSTL…FSSS), 2812 to 2832 (TTIT…STST), 2845 to 2867 (TMTE…STTE), 2922 to 2947 (SRIP…SVGI), 3074 to 3109 (ETPS…TPDI), 3309 to 3395 (TTSH…NSNS), 3420 to 3481 (ITTT…SHST), 3545 to 3565 (STTS…STPS), 3654 to 3727 (SITT…STTA), 3740 to 3812 (ITTI…TTAE), 4014 to 4047 (TETT…SIAT), 4067 to 4106 (TSNS…HSTP), 4182 to 4249 (TTET…SSIT), 4269 to 4313 (NSTS…PSFT), 4510 to 4530 (SHST…SHST), 4557 to 4617 (TETT…STSS), 4630 to 4651 (YSPS…STPS), 4802 to 4830 (TSSF…TATG), 4953 to 4986 (HSLP…KTIS), 5128 to 5203 (YTSS…ITTT), 5455 to 5486 (ITNT…PSFT), 5627 to 5680 (TTKT…ATSK), 5834 to 5908 (TTSY…HSPP), 5957 to 5977 (STPS…SSPS), 5990 to 6017 (HSTA…SSIT), 6030 to 6080 (TSSI…PPIF), 6120 to 6150 (TTET…SFTS), 6172 to 6197 (TEST…HTPP), 6456 to 6481 (TETP…HSTP), 6541 to 6598 (TKTT…TSTS), 6846 to 6867 (TTGT…TKTT), 6946 to 6971 (ITTT…RTSH), 6999 to 7021 (TTES…ETRS), 7067 to 7093 (TTET…HSPP), 7170 to 7206 (TETA…TTGI), 7225 to 7244 (SHST…ISHS), 7299 to 7329 (FTSS…TSHS), 7400 to 7433 (SYTS…HRTP), 7476 to 7532 (TETI…TTST), 7578 to 7600 (TGTS…TTSH), 7731 to 7766 (TEIT…ATSK), 7922 to 7996 (SHST…PPIF), 8036 to 8066 (TTET…SFTS), 8088 to 8113 (TEST…HTPP), 8372 to 8397 (TETP…HSTP), 8457 to 8514 (TKTT…TSTS), 8762 to 8783 (TTGT…TKTT), 8862 to 8887 (ITTT…RTSH), 8915 to 8941 (TTES…HSPP), 8983 to 9009 (TTET…HSPP), 9052 to 9122 (AETT…TTGI), 9141 to 9160 (SHST…ISHS), 9215 to 9240 (FTSS…TSTE), 9335 to 9366 (TSSI…HRTP), 9409 to 9465 (TETI…TTST), 9566 to 9589 (SHST…NPSL), 9612 to 9674 (TTET…PPSF), 9734 to 9760 (TTSH…SSFT), 9828 to 9859 (TSSI…HSTP), 9883 to 9908 (TTTE…RSHS), 9921 to 9973 (TTSH…SKTI), 10076 to 10099 (SDST…SPSF), 10120 to 10166 (ITTT…TVPS), 10189 to 10285 (ITTE…SPLS), 10389 to 10425 (TSSI…LSSA), 10462 to 10481 (TTKT…TSTK), 10501 to 10537 (SHSS…TSTS), 10640 to 10660 (TTSF…TPSF), 10750 to 10828 (TTTE…QRSP), 10887 to 11032 (TTET…SPSS), 11044 to 11065 (SHST…HSTP), 11276 to 11317 (TGTE…SPSH), 11446 to 11482 (STTA…ITTT), 11566 to 11697 (TTET…PGFS), 11754 to 11779 (TKTT…HSTP), 11818 to 11949 (SIAT…HSPP), 12067 to 12103 (TSSF…STPV), 12186 to 12220 (PSYT…HSTP), 12280 to 12323 (TETT…STPI), 12364 to 12452 (TTET…TTET), 12468 to 12578 (EMTS…NTPS), 12616 to 12639 (FTTA…DIPT), 12681 to 12700 (SSPS…TSPT), 12785 to 12805 (IPST…LQTS), 12985 to 13011 (TSSM…TVPT), and 13052 to 13086 (SLPT…TPTT). Low complexity-rich tracts occupy residues 513–538 (SMTT…LSST) and 547–559 (TSHT…PSTL). Low complexity predominate over residues 1620-1638 (TSTPPITSSVTPTNTVTSM). Positions 1944-1956 (TTSATMEPPSSSV) are enriched in polar residues. Over residues 1957-1968 (AATDTGQTTFTS) the composition is skewed to low complexity. Polar residues predominate over residues 2066–2091 (NASSMTTSETTYPNSPTGPVTNSMSK). Residues 2096–2107 (ASMTQTSSTATS) show a composition bias toward low complexity. Residues 2113 to 2123 (PSGSTTEIAKS) are compositionally biased toward polar residues. Positions 2170 to 2185 (STSMTPSTVSTSIPTS) are enriched in low complexity. The span at 2186–2195 (QPKTVNSSSG) shows a compositional bias: polar residues. Composition is skewed to low complexity over residues 2292–2308 (SSPP…AEST) and 2442–2458 (RSTP…PTST). Residues 2591-2603 (SAMSTSDIPSSPS) show a composition bias toward low complexity. Composition is skewed to low complexity over residues 2929–2944 (STDI…TPSS) and 3074–3097 (ETPS…TATS). Residues 3098–3109 (PETNTLTPTPDI) are compositionally biased toward polar residues. Over residues 3309 to 3359 (TTSHSTPSFTSPIATTKTSSHSSPSFTSSIATLETTSHSTPSFTSSITTNS) the composition is skewed to low complexity. Positions 3360–3370 (HSTPRFSSSIA) are enriched in polar residues. Over residues 3371 to 3385 (TRETTSHSTSSFTPS) the composition is skewed to low complexity. Positions 3386 to 3395 (IATTKTNSNS) are enriched in polar residues. Over residues 3420–3452 (ITTTETTSHSTPSFTSSMATTKTTSHSTPSFTS) the composition is skewed to low complexity. Residues 3453–3462 (PIATRETTSH) are compositionally biased toward polar residues. A compositionally biased stretch (low complexity) spans 3463-3481 (STPSFTSLITTTKTTSHST). Residues 3740–3749 (ITTIETPSHG) show a composition bias toward polar residues. Low complexity predominate over residues 3750 to 3785 (TPSFTSSITSTETTSHSSPSFISSITTTEITSHSTP). Over residues 3786 to 3812 (RFTSSITTMETPSHSTPNFTSSITTAE) the composition is skewed to polar residues. 2 stretches are compositionally biased toward low complexity: residues 4020–4042 (STPS…PSFT) and 4067–4096 (TSNS…SSMT). A compositionally biased stretch (polar residues) spans 4097-4106 (ATETTSHSTP). Low complexity-rich tracts occupy residues 4182–4228 (TTET…PSFT) and 4237–4249 (TSHS…SSIT). The segment covering 4557–4574 (TETTSNSSPSFTSSITNT) has biased composition (low complexity). The segment covering 4575-4601 (KTTSYSPPGFTSSIPATETTSRSPPGF) has biased composition (polar residues). Residues 4602-4617 (TSSITTTETTSHSTSS) show a composition bias toward low complexity. A compositionally biased stretch (low complexity) spans 4802–4827 (TSSFTSSITSTETTSHSTPSLTSSIT). Over residues 5137 to 5158 (TPSHITPSFTSTITTSESTSHS) the composition is skewed to low complexity. Positions 5159–5170 (NPSLTSAITTTE) are enriched in polar residues. 2 stretches are compositionally biased toward low complexity: residues 5174 to 5203 (HSPP…ITTT) and 5458 to 5486 (TEST…PSFT). Residues 5834–5858 (TTSYSTPSITSSITTTERTSHSTPS) show a composition bias toward low complexity. Positions 5859–5874 (YTSSIATRETPSHTVP) are enriched in polar residues. Positions 5875-5889 (SFTSSITTTESTSHS) are enriched in low complexity. Over residues 5890–5901 (NPSLTSAITTTE) the composition is skewed to polar residues. The segment covering 6045-6059 (SFTSSITTTDSTSHS) has biased composition (low complexity). Residues 6060–6071 (NPSLTSAITTTE) are compositionally biased toward polar residues. The span at 6172–6185 (TESTSHSTPSFTSS) shows a compositional bias: low complexity. Residues 6186–6197 (IATTETTSHTPP) are compositionally biased toward polar residues. Over residues 6456–6475 (TETPSHSTPSFPSSITTTQS) the composition is skewed to low complexity. A compositionally biased stretch (polar residues) spans 6852 to 6867 (HNTLGLSSSVDTTKTT). Positions 6946–6965 (ITTTETTSHSTPSITSSVTT) are enriched in low complexity. Residues 6999 to 7018 (TTESTSHSNPSLTSAITTTE) are compositionally biased toward polar residues. Over residues 7172 to 7206 (TASHSNPSSTSSITTTESTSHSPPRSTSAIATTGI) the composition is skewed to low complexity. 2 stretches are compositionally biased toward low complexity: residues 7300–7329 (TSSI…TSHS) and 7400–7427 (SYTS…STET). Residues 7476 to 7491 (TETISHSPPSFTSLTN) are compositionally biased toward polar residues. Low complexity predominate over residues 7492 to 7532 (STETTSHSPPSFTSSSTTTETPSHSTPGFSSSIATSKTTST). 2 stretches are compositionally biased toward low complexity: residues 7734–7766 (TSHS…ATSK) and 7922–7944 (SHST…STPS). Polar residues predominate over residues 7945–7987 (YTSSIATSETPSHTVPSFTSLITTTDSTSHSNPSLTSAITTTE). The span at 8088–8101 (TESTSHSTPSFTSS) shows a compositional bias: low complexity. Polar residues predominate over residues 8102–8113 (IATTETTSHTPP). Positions 8372 to 8391 (TETPSHSTPSFPSSITTTQS) are enriched in low complexity. Polar residues predominate over residues 8768–8783 (HNTLGLSSSVDTTKTT). Positions 8862 to 8881 (ITTTETTSHSTPSITSSVTT) are enriched in low complexity. The segment covering 8915–8934 (TTESTSHSNPSLTSAITTTE) has biased composition (polar residues). Low complexity-rich tracts occupy residues 9067–9081 (PTTE…SFTS) and 9088–9122 (TASH…TTGI). Positions 9335 to 9360 (TSSITTTETPSHSSPSFPSSITSTET) are enriched in low complexity. A compositionally biased stretch (polar residues) spans 9409–9424 (TETISHSPPSFTSLTN). 3 stretches are compositionally biased toward low complexity: residues 9425–9465 (STET…TTST), 9566–9585 (SHST…TSHS), and 9612–9624 (TTET…PSFT). A compositionally biased stretch (polar residues) spans 9625–9661 (SSIATAETTSHSPPSFTSLITTSETPSHSNPSFTSLI). Residues 9662-9674 (TTTESTSHSPPSF) show a composition bias toward low complexity. Polar residues-rich tracts occupy residues 9892–9903 (NPSLTSAITNTE) and 9921–9933 (TTSH…TSLI). A compositionally biased stretch (low complexity) spans 9934-9973 (TSTETTSHSPPSFTSSSTTTETPSHSTPGFSSSIATSKTI). The segment covering 10120 to 10130 (ITTTETTSHST) has biased composition (low complexity). Residues 10131–10166 (PNITSSVTTTERTSHSTPSYTSSIATGETPSHTVPS) are compositionally biased toward polar residues. Composition is skewed to low complexity over residues 10196–10271 (HSPP…SFTS) and 10394–10421 (TSET…STPS). Polar residues predominate over residues 10750–10791 (TTTETTSHSPPRFTSSITTTKTPSDSTPVFTPSIATSETSSH). 3 stretches are compositionally biased toward low complexity: residues 10792 to 10828 (STPG…QRSP), 10887 to 10937 (TTET…SSIT), and 10950 to 11032 (PSSI…SPSS). Positions 11278-11291 (TETTSHSPPHFTSS) are enriched in low complexity. Residues 11292-11317 (ITRTKTTSHRPPTFTSSITTTESPSH) are compositionally biased toward polar residues. The span at 11566–11682 (TTETTSHSIP…SHSTSGFTSS (117 aa)) shows a compositional bias: low complexity. Composition is skewed to polar residues over residues 11683 to 11697 (NATT…PGFS) and 11754 to 11769 (TKTT…SSIA). Composition is skewed to low complexity over residues 11770-11779 (STKTTSHSTP) and 11818-11880 (SIAT…SHST). Polar residues-rich tracts occupy residues 11881–11896 (PSFT…TSHS) and 11903–11912 (LIPTTKTTLH). Low complexity-rich tracts occupy residues 11913-11949 (SPPS…HSPP) and 12067-12091 (TSSF…TSSI). Over residues 12092–12103 (AVTETPSDSTPV) the composition is skewed to polar residues. A compositionally biased stretch (low complexity) spans 12280 to 12309 (TETTSHSAPNFSSSITSTETTSHSTPSFTS). Over residues 12310-12323 (AITSTETTSHSTPI) the composition is skewed to polar residues. Residues 12364 to 12412 (TTETTSHSTPGFASSITTTKTTSHSTPSFTSSIATSNTTSSSTPGFTSS) show a composition bias toward low complexity. Over residues 12413–12439 (IATTETTSRSTPGFTSSIVTTETTSPH) the composition is skewed to polar residues. Residues 12440 to 12452 (TPGFTSSITTTET) show a composition bias toward low complexity. Residues 12468–12477 (EMTSHSTPSL) show a composition bias toward polar residues. Low complexity-rich tracts occupy residues 12478-12569 (TFSI…VTTP), 12624-12639 (TSTP…DIPT), 12681-12692 (SSPSIQSTETSS), 12794-12805 (QTTPSIPSLQTS), 12990-13003 (PESE…ASSS), and 13073-13086 (TSET…TPTT). One can recognise an EGF-like domain in the interval 13130-13163 (SGDRCQLQTRCQNGGQWDGLKCQCPSTFYGSSCE). 2 disulfides stabilise this stretch: Cys13134–Cys13140 and Cys13153–Cys13162. Positions 13172–13297 (DVVETEVGME…DSIKVNNNSK (126 aa)) constitute an SEA domain. A helical transmembrane segment spans residues 13381-13401 (LVGGLTAGAALLVLLLLALGV).

In terms of processing, highly O-glycosylated and probably also N-glycosylated. In terms of tissue distribution, fetal and adult small intestine and fetal and adult colon.

Its subcellular location is the membrane. Its function is as follows. Major glycoprotein component of a variety of mucus gels. Thought to provide a protective, lubricating barrier against particles and infectious agents at mucosal surfaces. The sequence is that of Mucin-3B from Homo sapiens (Human).